Reading from the N-terminus, the 202-residue chain is Superoxide dismutase [Mn], mitochondrial (202 aa).

A mitochondrion-targeting transit peptide spans 1–5 (HGRGM). His-31 is a binding site for Mn(2+). Tyr-39 carries the 3'-nitrotyrosine modification. Residue Lys-49 is modified to N6-acetyllysine; alternate. N6-succinyllysine; alternate is present on Lys-49. His-79 lines the Mn(2+) pocket. Lys-95 is modified (N6-acetyllysine). N6-acetyllysine; alternate occurs at positions 103 and 111. 2 positions are modified to N6-succinyllysine; alternate: Lys-103 and Lys-111. Mn(2+) contacts are provided by Asp-164 and His-168. Lys-183 carries the post-translational modification N6-acetyllysine.

It belongs to the iron/manganese superoxide dismutase family. In terms of assembly, homotetramer. Mn(2+) is required as a cofactor. In terms of processing, nitrated under oxidative stress. Nitration coupled with oxidation inhibits the catalytic activity. Post-translationally, acetylation at Lys-122 decreases enzymatic activity. Deacetylated by SIRT3 upon exposure to ionizing radiations or after long fasting. Polyubiquitinated; leading to proteasomal degradation. Deubiquitinated by USP36 which increases protein stability.

The protein localises to the mitochondrion matrix. It catalyses the reaction 2 superoxide + 2 H(+) = H2O2 + O2. In terms of biological role, destroys superoxide anion radicals which are normally produced within the cells and which are toxic to biological systems. The protein is Superoxide dismutase [Mn], mitochondrial (SOD2) of Oryctolagus cuniculus (Rabbit).